We begin with the raw amino-acid sequence, 184 residues long: Der GTPase-activating protein YihI (184 aa).

Residues 1–107 (MNRPVKGAAD…VVAAKPTMSP (107 aa)) are disordered. Residues 21–32 (TREELEREARER) are compositionally biased toward basic and acidic residues. Positions 80-95 (SAVAKPKPKSKPSAPV) are enriched in low complexity.

The protein belongs to the YihI family. Interacts with Der.

In terms of biological role, a GTPase-activating protein (GAP) that modifies Der/EngA GTPase function. May play a role in ribosome biogenesis. The polypeptide is Der GTPase-activating protein YihI (Pectobacterium carotovorum subsp. carotovorum (strain PC1)).